The primary structure comprises 394 residues: Phosphoglycerate kinase (394 aa).

Substrate is bound by residues Asp-21 to Asn-23, Arg-36, His-59 to Arg-62, Arg-118, and Arg-151. Ser-183 is subject to Phosphoserine. 2 residues coordinate ATP: Lys-201 and Gly-292. A Phosphothreonine modification is found at Thr-299. Residues Glu-323 and Gly-350–Ser-353 each bind ATP.

The protein belongs to the phosphoglycerate kinase family. Monomer.

The protein localises to the cytoplasm. It catalyses the reaction (2R)-3-phosphoglycerate + ATP = (2R)-3-phospho-glyceroyl phosphate + ADP. The protein operates within carbohydrate degradation; glycolysis; pyruvate from D-glyceraldehyde 3-phosphate: step 2/5. The sequence is that of Phosphoglycerate kinase from Bacillus mycoides (strain KBAB4) (Bacillus weihenstephanensis).